Reading from the N-terminus, the 282-residue chain is Secretory carrier-associated membrane protein 3 (282 aa).

Residues 1-36 (MAGKHGRNGFEDDDVNPFAGGSVPPANNSRLPPLSH) form a disordered region. At 1-117 (MAGKHGRNGF…EIPIHLQRMQ (117 aa)) the chain is on the cytoplasmic side. Residues 48 to 92 (LDSSKDLKKKEKELQAMEAELNKRERELKRKEEAAAQAGIVIEDK) are a coiled coil. The next 4 membrane-spanning stretches (helical) occupy residues 118 to 138 (YLAFSSFLGLAACLFWNIIAT), 148 to 168 (VIIWLLAIIYFISGVPGAYVL), 185 to 205 (FGWFFLFYLIHIIFCVWAAVA), and 230 to 250 (IVGIFYFVGFGLFCLESLLSI). Residues 251-282 (GVIQQVYMYFRGSGKAAEMKREAARGALSSAF) lie on the Cytoplasmic side of the membrane.

The protein belongs to the SCAMP family.

The protein localises to the cell membrane. Its subcellular location is the cytoplasmic vesicle. It is found in the secretory vesicle membrane. In terms of biological role, probably involved in membrane trafficking. This Oryza sativa subsp. japonica (Rice) protein is Secretory carrier-associated membrane protein 3 (SCAMP3).